The primary structure comprises 208 residues: LexA repressor (208 aa).

Positions 30-50 (VREICAAVKLSSTSTVHGHLA) form a DNA-binding region, H-T-H motif. Catalysis depends on for autocatalytic cleavage activity residues Ser-129 and Lys-167.

The protein belongs to the peptidase S24 family. In terms of assembly, homodimer.

It catalyses the reaction Hydrolysis of Ala-|-Gly bond in repressor LexA.. Represses a number of genes involved in the response to DNA damage (SOS response), including recA and lexA. In the presence of single-stranded DNA, RecA interacts with LexA causing an autocatalytic cleavage which disrupts the DNA-binding part of LexA, leading to derepression of the SOS regulon and eventually DNA repair. The protein is LexA repressor of Lactobacillus helveticus (strain DPC 4571).